The sequence spans 175 residues: Disulfide bond formation protein B (175 aa).

The Cytoplasmic portion of the chain corresponds to 1–13; it reads MSKLVTFSQQRSA. The helical transmembrane segment at 14–30 threads the bilayer; that stretch reads WLILMFSALGLEASALY. Residues 31–48 lie on the Periplasmic side of the membrane; sequence FQYVMLLDPCVMCIYIRV. C40 and C43 form a disulfide bridge. Residues 49–64 form a helical membrane-spanning segment; sequence AVLGLILAGLVGSIAP. The Cytoplasmic segment spans residues 65 to 71; the sequence is RFWIVRF. The chain crosses the membrane as a helical span at residues 72 to 89; the sequence is LGMSLWGVSSAWGAKLSF. Residues 90–144 are Periplasmic-facing; sequence ELYQMQANPSPFSTCSFYPEFPTWMPLDAWMPSIFMPTGMCSDIPWTMMSLSMTQ. C104 and C130 are disulfide-bonded. Residues 145–163 traverse the membrane as a helical segment; it reads WTLIAFVGYSIAFLLFIYP. The Cytoplasmic portion of the chain corresponds to 164–175; it reads GLLYKKPTNPYS.

Belongs to the DsbB family.

Its subcellular location is the cell inner membrane. In terms of biological role, required for disulfide bond formation in some periplasmic proteins. Acts by oxidizing the DsbA protein. The chain is Disulfide bond formation protein B from Shewanella denitrificans (strain OS217 / ATCC BAA-1090 / DSM 15013).